The following is a 432-amino-acid chain: Probable exopolygalacturonase X (432 aa).

The first 23 residues, 1–23 (MKFSYSFVQVVTLLLSLSPSVEG), serve as a signal peptide directing secretion. 3 N-linked (GlcNAc...) asparagine glycosylation sites follow: Asn-113, Asn-129, and Asn-199. Residues 231 to 252 (SDNIVIQNSVINNGDDCVSFKP) form a PbH1 1 repeat. Asp-245 acts as the Proton donor in catalysis. Cys-247 and Cys-264 are disulfide-bonded. Asn-253 and Asn-265 each carry an N-linked (GlcNAc...) asparagine glycan. PbH1 repeat units lie at residues 254–274 (STNI…SVGS), 285–306 (VQNV…RIKV), and 327–348 (VKNV…EVTQ). The active site involves His-268. N-linked (GlcNAc...) asparagine glycans are attached at residues Asn-292, Asn-297, Asn-329, Asn-354, and Asn-364. The stretch at 362 to 394 (PSNLTISDIHFKNFRGTTSGKRDPNVGTIVCSS) is one PbH1 5 repeat. The cysteines at positions 392 and 398 are disulfide-linked.

This sequence belongs to the glycosyl hydrolase 28 family.

Its subcellular location is the secreted. The catalysed reaction is [(1-&gt;4)-alpha-D-galacturonosyl](n) + H2O = alpha-D-galacturonate + [(1-&gt;4)-alpha-D-galacturonosyl](n-1). Its function is as follows. Specific in hydrolyzing the terminal glycosidic bond of polygalacturonic acid and oligogalacturonates. The chain is Probable exopolygalacturonase X (pgaX) from Aspergillus fumigatus (strain CBS 144.89 / FGSC A1163 / CEA10) (Neosartorya fumigata).